A 248-amino-acid polypeptide reads, in one-letter code: 1-(5-phosphoribosyl)-5-[(5-phosphoribosylamino)methylideneamino] imidazole-4-carboxamide isomerase (248 aa).

D8 (proton acceptor) is an active-site residue. The active-site Proton donor is D130.

It belongs to the HisA/HisF family.

Its subcellular location is the cytoplasm. The enzyme catalyses 1-(5-phospho-beta-D-ribosyl)-5-[(5-phospho-beta-D-ribosylamino)methylideneamino]imidazole-4-carboxamide = 5-[(5-phospho-1-deoxy-D-ribulos-1-ylimino)methylamino]-1-(5-phospho-beta-D-ribosyl)imidazole-4-carboxamide. It functions in the pathway amino-acid biosynthesis; L-histidine biosynthesis; L-histidine from 5-phospho-alpha-D-ribose 1-diphosphate: step 4/9. The chain is 1-(5-phosphoribosyl)-5-[(5-phosphoribosylamino)methylideneamino] imidazole-4-carboxamide isomerase from Alkalilimnicola ehrlichii (strain ATCC BAA-1101 / DSM 17681 / MLHE-1).